We begin with the raw amino-acid sequence, 112 residues long: Tyrosine-protein phosphatase 8 (112 aa).

Positions 1 to 112 (ENSTAIVMIT…ANSEYGPVVV (112 aa)) constitute a Tyrosine-protein phosphatase domain.

It belongs to the protein-tyrosine phosphatase family.

The catalysed reaction is O-phospho-L-tyrosyl-[protein] + H2O = L-tyrosyl-[protein] + phosphate. This Styela plicata (Wrinkled sea squirt) protein is Tyrosine-protein phosphatase 8 (STY-8).